We begin with the raw amino-acid sequence, 268 residues long: Tryptophan synthase alpha chain (268 aa).

Catalysis depends on proton acceptor residues E49 and D60.

This sequence belongs to the TrpA family. As to quaternary structure, tetramer of two alpha and two beta chains.

It catalyses the reaction (1S,2R)-1-C-(indol-3-yl)glycerol 3-phosphate + L-serine = D-glyceraldehyde 3-phosphate + L-tryptophan + H2O. The protein operates within amino-acid biosynthesis; L-tryptophan biosynthesis; L-tryptophan from chorismate: step 5/5. Functionally, the alpha subunit is responsible for the aldol cleavage of indoleglycerol phosphate to indole and glyceraldehyde 3-phosphate. This Yersinia pseudotuberculosis serotype O:1b (strain IP 31758) protein is Tryptophan synthase alpha chain.